The sequence spans 107 residues: Heme-degrading monooxygenase (107 aa).

Residues 2–94 enclose the ABM domain; the sequence is IIVTNTAKIT…YILDNKITYY (93 aa). Asn-6 provides a ligand contact to Fe cation. His-76 serves as a coordination point for heme.

The protein belongs to the antibiotic biosynthesis monooxygenase family. Heme-degrading monooxygenase IsdG subfamily. Homodimer.

It localises to the cytoplasm. The catalysed reaction is heme b + 3 reduced [NADPH--hemoprotein reductase] + 3 O2 = biliverdin IXalpha + CO + Fe(2+) + 3 oxidized [NADPH--hemoprotein reductase] + 3 H2O + H(+). Functionally, allows bacterial pathogens to use the host heme as an iron source. Catalyzes the oxidative degradation of the heme macrocyclic porphyrin ring to the biliverdin in the presence of a suitable electron donor such as ascorbate or NADPH--cytochrome P450 reductase, with subsequent release of free iron. This is Heme-degrading monooxygenase from Bacillus thuringiensis subsp. konkukian (strain 97-27).